The following is a 343-amino-acid chain: Small ribosomal subunit biogenesis GTPase RsgA (343 aa).

Positions 116–275 (RGQLKPVAAN…LIDSPGIREF (160 aa)) constitute a CP-type G domain. GTP is bound by residues 163–166 (NKAD) and 217–225 (GQSGVGKSS). Residues Cys299, Cys304, His306, and Cys312 each coordinate Zn(2+).

This sequence belongs to the TRAFAC class YlqF/YawG GTPase family. RsgA subfamily. Monomer. Associates with 30S ribosomal subunit, binds 16S rRNA. The cofactor is Zn(2+).

It is found in the cytoplasm. In terms of biological role, one of several proteins that assist in the late maturation steps of the functional core of the 30S ribosomal subunit. Helps release RbfA from mature subunits. May play a role in the assembly of ribosomal proteins into the subunit. Circularly permuted GTPase that catalyzes slow GTP hydrolysis, GTPase activity is stimulated by the 30S ribosomal subunit. The sequence is that of Small ribosomal subunit biogenesis GTPase RsgA from Pseudomonas syringae pv. syringae (strain B728a).